We begin with the raw amino-acid sequence, 564 residues long: Septation ring formation regulator EzrA (564 aa).

The Extracellular segment spans residues 1–4; the sequence is MVLY. A helical membrane pass occupies residues 5–23; it reads IILAIIVIILIAVGVLFYL. Residues 24 to 564 lie on the Cytoplasmic side of the membrane; sequence RSNKRQIIEK…KHIEEEVIKQ (541 aa). 5 coiled-coil regions span residues 99–138, 190–223, 271–300, 350–435, and 471–550; these read SFNA…YKDN, DGNY…LIRE, LISR…LIEH, VRQF…RRLL, and VKQL…ESVE.

It belongs to the EzrA family.

Its subcellular location is the cell membrane. Functionally, negative regulator of FtsZ ring formation; modulates the frequency and position of FtsZ ring formation. Inhibits FtsZ ring formation at polar sites. Interacts either with FtsZ or with one of its binding partners to promote depolymerization. This is Septation ring formation regulator EzrA from Staphylococcus aureus (strain NCTC 8325 / PS 47).